The chain runs to 111 residues: Large ribosomal subunit protein uL22 (111 aa).

This sequence belongs to the universal ribosomal protein uL22 family. Part of the 50S ribosomal subunit.

Functionally, this protein binds specifically to 23S rRNA; its binding is stimulated by other ribosomal proteins, e.g. L4, L17, and L20. It is important during the early stages of 50S assembly. It makes multiple contacts with different domains of the 23S rRNA in the assembled 50S subunit and ribosome. In terms of biological role, the globular domain of the protein is located near the polypeptide exit tunnel on the outside of the subunit, while an extended beta-hairpin is found that lines the wall of the exit tunnel in the center of the 70S ribosome. This is Large ribosomal subunit protein uL22 from Chlamydia felis (strain Fe/C-56) (Chlamydophila felis).